A 381-amino-acid chain; its full sequence is Cytochrome b (381 aa).

Transmembrane regions (helical) follow at residues 36-56, 80-101, 116-136, and 181-201; these read FGSL…FLTM, WLIR…YIHI, WMVG…GYVL, and FYTF…IHLL. Heme b-binding residues include H86 and H100. Residues H185 and H199 each coordinate heme b. Residue H204 coordinates a ubiquinone. 4 helical membrane passes run 229 to 249, 291 to 311, 323 to 343, and 350 to 370; these read FKDM…TLTN, LGGV…PLTF, MNQI…WIGA, and YVFV…INPM.

The protein belongs to the cytochrome b family. The main subunits of complex b-c1 are: cytochrome b, cytochrome c1 and the Rieske protein. The cofactor is heme b.

The protein localises to the mitochondrion inner membrane. In terms of biological role, component of the ubiquinol-cytochrome c reductase complex (complex III or cytochrome b-c1 complex) that is part of the mitochondrial respiratory chain. The b-c1 complex mediates electron transfer from ubiquinol to cytochrome c. Contributes to the generation of a proton gradient across the mitochondrial membrane that is then used for ATP synthesis. In Ostrinia nubilalis (European corn borer), this protein is Cytochrome b (MT-CYB).